A 184-amino-acid polypeptide reads, in one-letter code: Adenylate kinase 2 (184 aa).

An ATP-binding site is contributed by 10 to 15; sequence GSGKST. The NMP stretch occupies residues 30–59; the sequence is STGEILREAISHLSELGRHAQPYMIKGELV. AMP-binding positions include threonine 31, arginine 36, 57 to 59, 85 to 88, and glutamine 92; these read ELV and GYPR. The segment at 126-132 is LID; sequence GRSLPDD. Arginine 127 contacts ATP. Arginine 140 is an AMP binding site. ATP is bound at residue glutamine 168.

This sequence belongs to the adenylate kinase family. As to quaternary structure, monomer.

Its subcellular location is the cytoplasm. It catalyses the reaction AMP + ATP = 2 ADP. It functions in the pathway purine metabolism; AMP biosynthesis via salvage pathway; AMP from ADP: step 1/1. Its function is as follows. Catalyzes the reversible transfer of the terminal phosphate group between ATP and AMP. Plays an important role in cellular energy homeostasis and in adenine nucleotide metabolism. The sequence is that of Adenylate kinase 2 from Nostoc sp. (strain PCC 7120 / SAG 25.82 / UTEX 2576).